Reading from the N-terminus, the 219-residue chain is Thiamine-phosphate synthase (219 aa).

Residues 44-48 and Asn79 contribute to the 4-amino-2-methyl-5-(diphosphooxymethyl)pyrimidine site; that span reads QFREK. Residues Asp80 and Asp99 each contribute to the Mg(2+) site. Position 117 (Ser117) interacts with 4-amino-2-methyl-5-(diphosphooxymethyl)pyrimidine. 143–145 contacts 2-[(2R,5Z)-2-carboxy-4-methylthiazol-5(2H)-ylidene]ethyl phosphate; that stretch reads TST. Lys146 contacts 4-amino-2-methyl-5-(diphosphooxymethyl)pyrimidine. 2-[(2R,5Z)-2-carboxy-4-methylthiazol-5(2H)-ylidene]ethyl phosphate-binding positions include Gly175 and 195–196; that span reads IS.

Belongs to the thiamine-phosphate synthase family. The cofactor is Mg(2+).

The catalysed reaction is 2-[(2R,5Z)-2-carboxy-4-methylthiazol-5(2H)-ylidene]ethyl phosphate + 4-amino-2-methyl-5-(diphosphooxymethyl)pyrimidine + 2 H(+) = thiamine phosphate + CO2 + diphosphate. It catalyses the reaction 2-(2-carboxy-4-methylthiazol-5-yl)ethyl phosphate + 4-amino-2-methyl-5-(diphosphooxymethyl)pyrimidine + 2 H(+) = thiamine phosphate + CO2 + diphosphate. The enzyme catalyses 4-methyl-5-(2-phosphooxyethyl)-thiazole + 4-amino-2-methyl-5-(diphosphooxymethyl)pyrimidine + H(+) = thiamine phosphate + diphosphate. The protein operates within cofactor biosynthesis; thiamine diphosphate biosynthesis; thiamine phosphate from 4-amino-2-methyl-5-diphosphomethylpyrimidine and 4-methyl-5-(2-phosphoethyl)-thiazole: step 1/1. Its function is as follows. Condenses 4-methyl-5-(beta-hydroxyethyl)thiazole monophosphate (THZ-P) and 2-methyl-4-amino-5-hydroxymethyl pyrimidine pyrophosphate (HMP-PP) to form thiamine monophosphate (TMP). The polypeptide is Thiamine-phosphate synthase (Bacillus cereus (strain 03BB102)).